Reading from the N-terminus, the 347-residue chain is Hyaluronidase conohyal-ad1 (347 aa).

A signal peptide spans 1–18 (MRAVVVVTGLVVVVVTTT). Residues 19 to 33 (LSLQDHDVKSASSPL) constitute a propeptide that is removed on maturation. The interval 27–49 (KSASSPLSSSVDQGSSGDDCDEG) is disordered. Over residues 28 to 43 (SASSPLSSSVDQGSSG) the composition is skewed to low complexity. C67 and C343 are oxidised to a cystine. E150 (proton donor) is an active-site residue.

It belongs to the glycosyl hydrolase 56 family. In terms of processing, contains 4 disulfide bonds. Post-translationally, is N-linked glycosylated at three positions. Expressed by the venom duct.

It is found in the secreted. The catalysed reaction is Random hydrolysis of (1-&gt;4)-linkages between N-acetyl-beta-D-glucosamine and D-glucuronate residues in hyaluronate.. Its function is as follows. Hyaluronidase catalyzes the hydrolysis of hyaluronic acid (HA), an anionic, nonsulfated glycosaminoglycan distributed widely throughout connective, epithelial, and neural tissues. In venom, they are known to enhance diffusion of the venom by degrading the extracellular matrix. The polypeptide is Hyaluronidase conohyal-ad1 (Conus adamsonii (Rhododendron cone)).